A 333-amino-acid polypeptide reads, in one-letter code: Sphingomyelinase C (333 aa).

The N-terminal stretch at 1 to 27 (MKGKLLKGVLSLGVGLGALYSGTSAQA) is a signal peptide. Cys150 and Cys186 are oxidised to a cystine.

It belongs to the neutral sphingomyelinase family. The cofactor is Mg(2+).

The protein resides in the secreted. It carries out the reaction a sphingomyelin + H2O = phosphocholine + an N-acylsphing-4-enine + H(+). Activated by cobalt and manganese ions. Required, with sphingomyelinase, to effect target cell lysis (hemolysis). The sequence is that of Sphingomyelinase C (sph) from Bacillus cereus.